Here is a 156-residue protein sequence, read N- to C-terminus: MPLLLTGKKFHNDLNKNKCLAMFAPLEGGYETRLLRRMRAKGFKTYITSARGLGDPEVFLLKLHGIRPPHLGHQSIGRNGALGEVQQVIPQASELFNENDKDKLLWLLEGQVLSQSELESLIKICTSDNKLKIVVEMGGSRKLEWKSLNDYILNEF.

The protein belongs to the complex I NdhN subunit family. As to quaternary structure, NDH-1 can be composed of about 15 different subunits; different subcomplexes with different compositions have been identified which probably have different functions.

Its subcellular location is the cellular thylakoid membrane. The enzyme catalyses a plastoquinone + NADH + (n+1) H(+)(in) = a plastoquinol + NAD(+) + n H(+)(out). The catalysed reaction is a plastoquinone + NADPH + (n+1) H(+)(in) = a plastoquinol + NADP(+) + n H(+)(out). Functionally, NDH-1 shuttles electrons from an unknown electron donor, via FMN and iron-sulfur (Fe-S) centers, to quinones in the respiratory and/or the photosynthetic chain. The immediate electron acceptor for the enzyme in this species is believed to be plastoquinone. Couples the redox reaction to proton translocation, and thus conserves the redox energy in a proton gradient. Cyanobacterial NDH-1 also plays a role in inorganic carbon-concentration. This chain is NAD(P)H-quinone oxidoreductase subunit N, found in Prochlorococcus marinus subsp. pastoris (strain CCMP1986 / NIES-2087 / MED4).